The following is a 491-amino-acid chain: Serine hydroxymethyltransferase (491 aa).

(6S)-5,6,7,8-tetrahydrofolate-binding positions include Leu173 and 177-179 (GHL). Lys285 is modified (N6-(pyridoxal phosphate)lysine).

This sequence belongs to the SHMT family. As to quaternary structure, homodimer. The cofactor is pyridoxal 5'-phosphate.

It localises to the cytoplasm. It catalyses the reaction (6R)-5,10-methylene-5,6,7,8-tetrahydrofolate + glycine + H2O = (6S)-5,6,7,8-tetrahydrofolate + L-serine. Its pathway is one-carbon metabolism; tetrahydrofolate interconversion. It functions in the pathway amino-acid biosynthesis; glycine biosynthesis; glycine from L-serine: step 1/1. Functionally, catalyzes the reversible interconversion of serine and glycine with tetrahydrofolate (THF) serving as the one-carbon carrier. This reaction serves as the major source of one-carbon groups required for the biosynthesis of purines, thymidylate, methionine, and other important biomolecules. Also exhibits THF-independent aldolase activity toward beta-hydroxyamino acids, producing glycine and aldehydes, via a retro-aldol mechanism. The protein is Serine hydroxymethyltransferase of Cutibacterium acnes (strain DSM 16379 / KPA171202) (Propionibacterium acnes).